A 115-amino-acid chain; its full sequence is Probable 4-amino-4-deoxy-L-arabinose-phosphoundecaprenol flippase subunit ArnE (115 aa).

3 helical membrane passes run 42 to 62 (PWPWLALLALGLGLLCWLLLL), 65 to 85 (VEVGSAYPMLALNFVLVTLAA), and 93 to 112 (VDRRHLAGLLLIVAGVVLLG). The 68-residue stretch at 46-113 (LALLALGLGL…IVAGVVLLGR (68 aa)) folds into the EamA domain.

This sequence belongs to the ArnE family. As to quaternary structure, heterodimer of ArnE and ArnF.

It localises to the cell inner membrane. Its pathway is bacterial outer membrane biogenesis; lipopolysaccharide biosynthesis. In terms of biological role, translocates 4-amino-4-deoxy-L-arabinose-phosphoundecaprenol (alpha-L-Ara4N-phosphoundecaprenol) from the cytoplasmic to the periplasmic side of the inner membrane. The protein is Probable 4-amino-4-deoxy-L-arabinose-phosphoundecaprenol flippase subunit ArnE of Pseudomonas aeruginosa (strain UCBPP-PA14).